Reading from the N-terminus, the 471-residue chain is A-type ATP synthase subunit B (471 aa).

This sequence belongs to the ATPase alpha/beta chains family. In terms of assembly, has multiple subunits with at least A(3), B(3), C, D, E, F, H, I and proteolipid K(x).

It is found in the cell membrane. Functionally, component of the A-type ATP synthase that produces ATP from ADP in the presence of a proton gradient across the membrane. The B chain is a regulatory subunit. The sequence is that of A-type ATP synthase subunit B from Ignicoccus hospitalis (strain KIN4/I / DSM 18386 / JCM 14125).